We begin with the raw amino-acid sequence, 278 residues long: HTH-type transcriptional activator RhaS (278 aa).

The 99-residue stretch at 174–272 (NLLLAWLEDH…NWSPRDIRQG (99 aa)) folds into the HTH araC/xylS-type domain. DNA-binding regions (H-T-H motif) lie at residues 191–212 (DAVA…KQKT) and 239–262 (VTDI…RREF).

As to quaternary structure, binds DNA as a dimer.

It is found in the cytoplasm. Functionally, activates expression of the rhaBAD and rhaT operons. This chain is HTH-type transcriptional activator RhaS, found in Escherichia coli O45:K1 (strain S88 / ExPEC).